Consider the following 63-residue polypeptide: Cecropin-B (63 aa).

The first 22 residues, 1-22 (MNFAKILSFVFALVLALSMTSA), serve as a signal peptide directing secretion. Residues 23-26 (APEP) constitute a propeptide, removed by a dipeptidylpeptidase. At Lys47 the chain carries 5-hydroxylysine; partial. Ile61 bears the Isoleucine amide mark.

It belongs to the cecropin family. Lepidopteran-B differs from lepidopteran-A by its hydroxylated residue. In terms of tissue distribution, highest expression in fat body and hemocytes. Is also expressed in Malpighian tubules and to a much lesser extent in midgut. Not present in silk gland.

Its subcellular location is the secreted. Its function is as follows. Cecropins have lytic and antibacterial activity against several Gram-positive and Gram-negative bacteria. The polypeptide is Cecropin-B (CECB1) (Bombyx mori (Silk moth)).